The following is a 197-amino-acid chain: uncharacterized protein (197 aa).

Positions 1 to 135 are disordered; that stretch reads MKTPWKFLAR…ERGKRANARV (135 aa). A compositionally biased stretch (polar residues) spans 14 to 32; that stretch reads RQPSGKTQESSAGNDTGSK. Residues 83-96 show a composition bias toward basic and acidic residues; the sequence is IHADEAQTTARDEA. Residues 116-132 are compositionally biased toward basic residues; it reads SQRKPRIKRRERGKRAN.

This sequence to Rhizobium NGR234A y4nF and y4aO.

This is an uncharacterized protein from Rhizobium meliloti (strain 1021) (Ensifer meliloti).